Here is a 133-residue protein sequence, read N- to C-terminus: Small ribosomal subunit protein uS8 (133 aa).

Belongs to the universal ribosomal protein uS8 family. Part of the 30S ribosomal subunit. Contacts proteins S5 and S12.

In terms of biological role, one of the primary rRNA binding proteins, it binds directly to 16S rRNA central domain where it helps coordinate assembly of the platform of the 30S subunit. In Prochlorococcus marinus (strain MIT 9313), this protein is Small ribosomal subunit protein uS8.